The primary structure comprises 178 residues: MGDPRRLGKKYDTPNHPWIGERIQKEKEISQKYGLVNKKELWKMETQLRNYRRQARKLISDTTTQGGKEAVQLFNVLKRYAILIEEEPTLDHVLSLNIESILERRLQTIVFRKGLAKTPKQARQFIVHGHIAVNGKRVTAPAYLISVAENDAIEYVSNSPMASENHPERTAATSEENQ.

The 63-residue stretch at 104–166 (RRLQTIVFRK…SNSPMASENH (63 aa)) folds into the S4 RNA-binding domain. The segment at 158 to 178 (NSPMASENHPERTAATSEENQ) is disordered.

The protein belongs to the universal ribosomal protein uS4 family. In terms of assembly, part of the 30S ribosomal subunit. Contacts protein S5. The interaction surface between S4 and S5 is involved in control of translational fidelity.

Functionally, one of the primary rRNA binding proteins, it binds directly to 16S rRNA where it nucleates assembly of the body of the 30S subunit. In terms of biological role, with S5 and S12 plays an important role in translational accuracy. In Methanococcus maripaludis (strain DSM 14266 / JCM 13030 / NBRC 101832 / S2 / LL), this protein is Small ribosomal subunit protein uS4.